The sequence spans 224 residues: Uracil-DNA glycosylase 2 (224 aa).

The active-site Proton acceptor is the D64.

It belongs to the uracil-DNA glycosylase (UDG) superfamily. UNG family.

The protein resides in the cytoplasm. It carries out the reaction Hydrolyzes single-stranded DNA or mismatched double-stranded DNA and polynucleotides, releasing free uracil.. Functionally, excises uracil residues from the DNA which can arise as a result of misincorporation of dUMP residues by DNA polymerase or due to deamination of cytosine. This Listeria innocua serovar 6a (strain ATCC BAA-680 / CLIP 11262) protein is Uracil-DNA glycosylase 2.